The primary structure comprises 271 residues: Short-chain dehydrogenase PC-15 (271 aa).

NADP(+) contacts are provided by I8, T34, K40, D56, N84, Y148, K152, V181, and T183. Y148 serves as the catalytic Proton acceptor. K152 functions as the Lowers pKa of active site Tyr in the catalytic mechanism.

Belongs to the short-chain dehydrogenases/reductases (SDR) family.

Its pathway is secondary metabolite biosynthesis. Its function is as follows. Short-chain dehydrogenase; part of the gene cluster that mediates the biosynthesis of the indole diterpenes penitrems. The geranylgeranyl diphosphate (GGPP) synthase penG catalyzes the first step in penitrem biosynthesis via conversion of farnesyl pyrophosphate and isopentyl pyrophosphate into geranylgeranyl pyrophosphate (GGPP). Condensation of indole-3-glycerol phosphate with GGPP by the prenyl transferase penC then forms 3-geranylgeranylindole (3-GGI). Epoxidation by the FAD-dependent monooxygenase penM leads to a epoxidized-GGI that is substrate of the terpene cyclase penB for cyclization to yield paspaline. Paspaline is subsequently converted to 13-desoxypaxilline by the cytochrome P450 monooxygenase penP, the latter being then converted to paxilline by the cytochrome P450 monooxygenase penQ. Paxilline is converted to beta-paxitriol via C-10 ketoreduction by the short-chain dehydrogenase PC-15 which can be monoprenylated at the C-20 by the indole diterpene prenyltransferase penD. A two-step elimination (acetylation and elimination) process performed by the O-acetyltransferase PC-16 and the P.simplicissimum ptmI-ortholog not yet identified in P.crustosum, leads to the production of the prenylated form of penijanthine. The FAD-linked oxidoreductase ptmO then converts the prenylated form of penijanthine into PC-M5 which is in turn transformed into PC-M4 by the aromatic dimethylallyltransferase PC-22. A series of oxidation steps involving 4 cytochrome P450 monooxygenases (PC-21, PC-05, PC-23, PC-20) and a FAD-dependent monooxygenase (PC-14) are required for the transformation of PC-M4 to penitrems A and E. Synthesis of these final products is proposed to proceed via penitrems D and C (PC-21, PC-05, PC-14) and penitrems B and F (PC-21, PC-05, PC-14, PC-23). In Penicillium crustosum (Blue mold fungus), this protein is Short-chain dehydrogenase PC-15.